Here is a 494-residue protein sequence, read N- to C-terminus: Putative NAD kinase 3 (494 aa).

Belongs to the NAD kinase family.

The enzyme catalyses NAD(+) + ATP = ADP + NADP(+) + H(+). The polypeptide is Putative NAD kinase 3 (Oryza sativa subsp. japonica (Rice)).